The chain runs to 331 residues: MLGIWTLLPLVLTYVVRLLSKCVNAQVTDISSKGFELRKIVTTIETQNLEGLHHEGQFCRNPCPPGERKARDCTVNEDEPDCVPCQEGKEYTDKGHFSSKCRRCRLCDEGHGLEVEINCTRTQNTKCRCKPNFFCNSAVCEHCDPCTKCKHGIIEECTLTSNTKCKEEDSRSDLPWLCLLLLLIPPIVYVVIKKACRKHRKENQGPHESTTLNPETAINLSDVDLSKYITTIAGAMTLSQVKDFVRKNGVSEAKIDEIKNDNVQDTAEQKVQLLRNWYQLHGKKDACDTLIKGLKTADLCTLAEKIHAVILKDITSDTENSNFGNEVQNLV.

The first 25 residues, 1–25, serve as a signal peptide directing secretion; the sequence is MLGIWTLLPLVLTYVVRLLSKCVNA. Over 26 to 171 the chain is Extracellular; it reads QVTDISSKGF…NTKCKEEDSR (146 aa). TNFR-Cys repeat units follow at residues 47-83, 84-127, and 128-166; these read QNLE…PDCV, PCQE…NTKC, and RCKP…TKCK. 8 cysteine pairs are disulfide-bonded: cysteine 59–cysteine 73, cysteine 63–cysteine 82, cysteine 85–cysteine 101, cysteine 104–cysteine 119, cysteine 107–cysteine 127, cysteine 129–cysteine 143, cysteine 146–cysteine 157, and cysteine 149–cysteine 165. An N-linked (GlcNAc...) asparagine glycan is attached at asparagine 118. The helical transmembrane segment at 172–192 threads the bilayer; the sequence is SDLPWLCLLLLLIPPIVYVVI. Over 193 to 331 the chain is Cytoplasmic; that stretch reads KKACRKHRKE…NFGNEVQNLV (139 aa). A lipid anchor (S-palmitoyl cysteine) is attached at cysteine 196. An interaction with HIPK3 region spans residues 209-313; sequence STTLNPETAI…EKIHAVILKD (105 aa). Threonine 211 bears the Phosphothreonine mark. Serine 221 bears the Phosphoserine mark. The segment at 226-250 is interaction with CALM; the sequence is SKYITTIAGAMTLSQVKDFVRKNGV. One can recognise a Death domain in the interval 226-310; it reads SKYITTIAGA…TLAEKIHAVI (85 aa). Threonine 318 bears the Phosphothreonine mark.

As to quaternary structure, component of the death-induced signaling complex (DISC) composed of cell surface receptor FAS/CD95, adapter protein FADD and the CASP8 protease; recruitment of CASP8 to the complex is required for processing of CASP8 into the p18 and p10 subunits. Interacts directly (via DED domain) with NOL3 (via CARD domain); inhibits death-inducing signaling complex (DISC) assembly by inhibiting the increase in FAS-FADD binding induced by FAS activation. Binds DAXX. Interacts with HIPK3. Part of a complex containing HIPK3 and FADD. Binds RIPK1 and FAIM2. Interacts with BABAM2 and FEM1B. Interacts with CALM. In the absence of stimulation, interacts with BIRC2, DDX3X and GSK3B. The interaction with BIRC2 and DDX3X is further enhanced upon receptor stimulation and accompanied by DDX3X and BIRC2 cleavage. In terms of processing, palmitoylated. Palmitoylation by ZDHHC7 prevents the lysosomal degradation of FAS regulating its expression at the plasma membrane.

Its subcellular location is the cell membrane. The protein resides in the membrane raft. In terms of biological role, receptor for TNFSF6/FASLG. The adapter molecule FADD recruits caspase CASP8 to the activated receptor. The resulting death-inducing signaling complex (DISC) performs CASP8 proteolytic activation which initiates the subsequent cascade of caspases (aspartate-specific cysteine proteases) mediating apoptosis. FAS-mediated apoptosis may have a role in the induction of peripheral tolerance, in the antigen-stimulated suicide of mature T-cells, or both. This chain is Tumor necrosis factor receptor superfamily member 6 (FAS), found in Macaca nemestrina (Pig-tailed macaque).